A 631-amino-acid polypeptide reads, in one-letter code: Glutathione S-transferase C-terminal domain-containing protein (631 aa).

One can recognise a GST C-terminal domain in the interval 128–330 (LGFKKTCLKA…QEVPRVQTAA (203 aa)). Disordered stretches follow at residues 188 to 233 (HNDD…SSSA) and 345 to 373 (TTSSQQPPNLDEAPSAEEQNDPSFIGGPR). The segment covering 211 to 224 (AKEKTKSKGHRQET) has biased composition (basic and acidic residues). Serine 231 is modified (phosphoserine).

The protein belongs to the GSTCD family.

The protein resides in the cytoplasm. The polypeptide is Glutathione S-transferase C-terminal domain-containing protein (GSTCD) (Bos taurus (Bovine)).